A 318-amino-acid polypeptide reads, in one-letter code: D-alanine--D-alanine ligase (318 aa).

The ATP-grasp domain occupies 116-311; that stretch reads KQVWQSLGIP…FQQLVLAILA (196 aa). 142 to 197 provides a ligand contact to ATP; sequence STELGFPLIVKPAHEGSSIGMAKVNSAQELVAAWQDAAKYDSQVLVEQWIHGPEFT. The Mg(2+) site is built by aspartate 265, glutamate 278, and asparagine 280.

It belongs to the D-alanine--D-alanine ligase family. Mg(2+) is required as a cofactor. The cofactor is Mn(2+).

It is found in the cytoplasm. It carries out the reaction 2 D-alanine + ATP = D-alanyl-D-alanine + ADP + phosphate + H(+). It participates in cell wall biogenesis; peptidoglycan biosynthesis. Cell wall formation. In Pseudomonas putida (strain GB-1), this protein is D-alanine--D-alanine ligase.